Reading from the N-terminus, the 130-residue chain is Protein YchQ (130 aa).

Over Met1–Ser9 the chain is Periplasmic. Residues Val10–Leu28 traverse the membrane as a helical segment. Residues Arg29 to Arg39 are Cytoplasmic-facing. The chain crosses the membrane as a helical span at residues Trp40–Leu59. Over Met60–Gln73 the chain is Periplasmic. A helical membrane pass occupies residues Trp74–Leu93. At Asp94–Arg104 the chain is on the cytoplasmic side. Residues Ile105–Thr124 traverse the membrane as a helical segment. Residues Lys125–Gly130 are Periplasmic-facing.

This sequence belongs to the SirB2 family.

It localises to the cell inner membrane. The sequence is that of Protein YchQ (ychQ) from Escherichia coli (strain K12).